The following is a 375-amino-acid chain: Probable G-protein coupled receptor 27 (375 aa).

Topologically, residues 1 to 23 (MANASEPGGSGGGEAAALGLKLA) are extracellular. An N-linked (GlcNAc...) asparagine glycan is attached at Asn-3. A helical transmembrane segment spans residues 24–44 (TLSLLLCVSLAGNVLFALLIV). At 45-55 (RERSLHRAPYY) the chain is on the cytoplasmic side. Residues 56 to 76 (LLLDLCLADGLRALACLPAVM) form a helical membrane-spanning segment. Residues 77-97 (LAARRAAAAAGAPPGALGCKL) are Extracellular-facing. Cys-95 and Cys-171 form a disulfide bridge. The chain crosses the membrane as a helical span at residues 98–118 (LAFLAALFCFHAAFLLLGVGV). At 119–139 (TRYLAIAHHRFYAERLAGWPC) the chain is on the cytoplasmic side. Residues 140-160 (AAMLVCAAWALALAAAFPPVL) traverse the membrane as a helical segment. The Extracellular portion of the chain corresponds to 161 to 181 (DGGGDDEDAPCALEQRPDGAP). Residues 182-202 (GALGFLLLLAVVVGATHLVYL) traverse the membrane as a helical segment. Residues 203 to 285 (RLLFFIHDRR…FKTEKRLCKM (83 aa)) are Cytoplasmic-facing. The helical transmembrane segment at 286–306 (FYAVTLLFLLLWGPYVVASYL) threads the bilayer. At 307–320 (RVLVRPGAVPQAYL) the chain is on the extracellular side. A helical transmembrane segment spans residues 321–341 (TASVWLTFAQAGINPVVCFLF). The Cytoplasmic portion of the chain corresponds to 342-375 (NRELRDCFRAQFPCCQSPRTTQATHPCDLKGIGL).

The protein belongs to the G-protein coupled receptor 1 family. As to expression, highly expressed as a 3.0 kb transcript in brain, ovary, testis, heart, prostate and peripheral Leukocytes. Lower levels in pancreas and small intestine. A 2.3 kb transcript was also found in peripheral Leukocytes. In brain regions, detected as a 3.0 kb transcript in all regions tested. Highest levels in the caudate nucleus, putamen, hippocampus and subthalamic nucleus. Lowest level in the cerebellum.

Its subcellular location is the cell membrane. Orphan receptor. Possible candidate for amine-like G-protein coupled receptor. This Homo sapiens (Human) protein is Probable G-protein coupled receptor 27 (GPR27).